Consider the following 810-residue polypeptide: Fibroblast growth factor receptor 1-A (810 aa).

The first 26 residues, 1-26, serve as a signal peptide directing secretion; it reads MKMMMIMKTTLLLISVLLTQALQSQG. Over 27–363 the chain is Extracellular; that stretch reads RPAIQDEAPA…TQLPNQTYLE (337 aa). 3 consecutive Ig-like C2-type domains span residues 28-115, 147-235, and 244-346; these read PAIQ…FNIS, PDKM…YQLD, and PILQ…AWLT. A disulfide bridge links Cys53 with Cys99. 9 N-linked (GlcNAc...) asparagine glycosylation sites follow: Asn107, Asn113, Asn216, Asn229, Asn253, Asn285, Asn306, Asn319, and Asn358. Cys167 and Cys219 form a disulfide bridge. The cysteines at positions 266 and 330 are disulfide-linked. The chain crosses the membrane as a helical span at residues 364–384; the sequence is VLIYCVGFFLICVMVGTAVLA. Residues 385-810 are Cytoplasmic-facing; that stretch reads KMHSSAKKSD…PNRGVAFKKR (426 aa). Tyr450 bears the Phosphotyrosine; by autocatalysis mark. Positions 465-754 constitute a Protein kinase domain; sequence LVLGKPLGEG…LSMTSNQEYL (290 aa). Residues 471–477, Lys501, 549–551, and Asn555 contribute to the ATP site; these read LGEGCFG and EFA. Phosphotyrosine; by autocatalysis is present on residues Tyr570 and Tyr572. Asp610 (proton acceptor) is an active-site residue. Residues Arg614 and Asp628 each contribute to the ATP site. Residues Tyr640, Tyr641, Tyr717, and Tyr753 each carry the phosphotyrosine; by autocatalysis modification. Residues 787 to 810 form a disordered region; it reads AGADEPCLPKFPPHPNRGVAFKKR.

It belongs to the protein kinase superfamily. Tyr protein kinase family. Fibroblast growth factor receptor subfamily. In terms of assembly, monomer. Homodimer after ligand binding. Interacts with cnpy1. Autophosphorylated. Binding of FGF family members together with heparan sulfate proteoglycan or heparin promotes receptor dimerization and autophosphorylation on tyrosine residues. Autophosphorylation occurs in trans between the two FGFR molecules present in the dimer and proceeds in a highly ordered manner. Phosphotyrosine residues provide docking sites for interacting proteins and so are crucial for FGFR1 function and its regulation. Post-translationally, ubiquitinated. FGFR1 is rapidly ubiquitinated after autophosphorylation, leading to internalization and degradation. In terms of processing, N-glycosylated in the endoplasmic reticulum. The N-glycan chains undergo further maturation to an Endo H-resistant form in the Golgi apparatus. As to expression, initially expressed in adaxial mesoderm with transcripts distinctly localized to the anterior portion of each half-somite. Hereupon, also strongly expressed in the otic vesicles, branchial arches and the brain, especially at the midbrain-hindbrain boundary (MHB).

Its subcellular location is the cell membrane. The protein localises to the nucleus. The protein resides in the cytoplasm. It localises to the cytosol. It is found in the cytoplasmic vesicle. It catalyses the reaction L-tyrosyl-[protein] + ATP = O-phospho-L-tyrosyl-[protein] + ADP + H(+). Present in an inactive conformation in the absence of bound ligand. Ligand binding leads to dimerization and activation by sequential autophosphorylation on tyrosine residues. In terms of biological role, tyrosine-protein kinase that acts as a cell-surface receptor for fibroblast growth factors and plays an essential role in the regulation of embryonic development, cell proliferation, differentiation and migration. Required for normal mesoderm patterning and normal skeletogenesis. Phosphorylates PLCG1, FRS2, GAB1 and SHB. Ligand binding leads to the activation of several signaling cascades. Activation of PLCG1 leads to the production of the cellular signaling molecules diacylglycerol and inositol-1,4,5-trisphosphate. Phosphorylation of FRS2 triggers recruitment of GRB2, GAB1, PIK3R1 and SOS1, and mediates activation of RAS, MAPK1/ERK2, MAPK3/ERK1 and the MAP kinase signaling pathway, as well as of the AKT1 signaling pathway. Promotes phosphorylation of SHC1, STAT1 and PTPN11/SHP2. In the nucleus, enhances RPS6KA1 and CREB1 activity and contributes to the regulation of transcription. FGFR1 signaling is down-regulated by ubiquitination, internalization and degradation. The sequence is that of Fibroblast growth factor receptor 1-A (fgfr1a) from Danio rerio (Zebrafish).